Here is a 1950-residue protein sequence, read N- to C-terminus: E3 ubiquitin-protein ligase UBR1 (1950 aa).

Positions 118, 123, 136, 139, 148, 151, 157, 160, 161, 175, 177, and 189 each coordinate Zn(2+). Residues 121-194 form a UBR-type zinc finger; that stretch reads RNCGRKFKIG…SPLHCKAEEQ (74 aa). Phosphoserine is present on residues S296 and S300. The ubiquitin-binding loop stretch occupies residues 678–681; that stretch reads HVLH. A Zn(2+)-binding site is contributed by D952. The UBC2-binding region (U2BR) stretch occupies residues 1165-1200; that stretch reads KERKRRLAKKHQARLLAKFNNQQTKFMKEHESEFDE. 8 residues coordinate Zn(2+): C1220, C1223, C1295, H1297, H1300, C1303, C1320, and C1323. The segment at 1220–1324 adopts an RING-type; atypical zinc-finger fold; sequence CALCQDSSST…SNAFICPLCQ (105 aa). Positions 1333-1665 are cap helical domain (CHD); that stretch reads LCQTSKANTG…YEYCGIIKLI (333 aa). Zn(2+) contacts are provided by C1703, C1706, H1722, C1727, H1763, and D1775. Disordered regions lie at residues 1826 to 1846 and 1893 to 1950; these read RPRRIPPTDEDDEDMEEGEDG and TLQP…REIW. 2 stretches are compositionally biased toward acidic residues: residues 1833–1846 and 1934–1950; these read TDEDDEDMEEGEDG and DEDDSDDNDDSDEREIW. S1938 is subject to Phosphoserine.

The protein belongs to the E3 ubiquitin-protein ligase UBR1-like family. In terms of assembly, interacts with UBC2. Interacts with RPN2, RPT1 and RPT6 from the 26S proteasome.

It catalyses the reaction S-ubiquitinyl-[E2 ubiquitin-conjugating enzyme]-L-cysteine + [acceptor protein]-L-lysine = [E2 ubiquitin-conjugating enzyme]-L-cysteine + N(6)-ubiquitinyl-[acceptor protein]-L-lysine.. It functions in the pathway protein modification; protein ubiquitination. In terms of biological role, ubiquitin ligase protein which is a component of the N-end rule pathway. Recognizes and binds to proteins bearing specific N-terminal residues that are destabilizing according to the N-end rule, leading to their ubiquitination and subsequent degradation. Recognizes both type-1 and type-2 N-degrons, containing positively charged amino acids (Arg, Lys and His) and bulky and hydrophobic amino acids, respectively. This chain is E3 ubiquitin-protein ligase UBR1, found in Saccharomyces cerevisiae (strain ATCC 204508 / S288c) (Baker's yeast).